The primary structure comprises 187 residues: Putative glutathione-dependent formaldehyde-activating enzyme (187 aa).

The region spanning 20–166 is the CENP-V/GFA domain; the sequence is FQGGVLKCKC…FESLGLESYD (147 aa). Zn(2+)-binding residues include Cys-27, Cys-29, Cys-48, Cys-50, Cys-53, Cys-95, and Cys-98.

The protein belongs to the Gfa family. Requires Zn(2+) as cofactor.

The enzyme catalyses S-(hydroxymethyl)glutathione = glutathione + formaldehyde. Its pathway is one-carbon metabolism; formaldehyde degradation; formate from formaldehyde (glutathione route): step 1/3. Its function is as follows. Catalyzes the condensation of formaldehyde and glutathione to S-hydroxymethylglutathione. The polypeptide is Putative glutathione-dependent formaldehyde-activating enzyme (Verticillium alfalfae (strain VaMs.102 / ATCC MYA-4576 / FGSC 10136) (Verticillium wilt of alfalfa)).